A 95-amino-acid chain; its full sequence is Acylphosphatase (95 aa).

The region spanning 7 to 95 (RLTAWVLGTV…PKGEVGFRTR (89 aa)) is the Acylphosphatase-like domain. Active-site residues include arginine 22 and asparagine 40.

Belongs to the acylphosphatase family.

The catalysed reaction is an acyl phosphate + H2O = a carboxylate + phosphate + H(+). This is Acylphosphatase (acyP) from Corynebacterium diphtheriae (strain ATCC 700971 / NCTC 13129 / Biotype gravis).